Reading from the N-terminus, the 860-residue chain is Alanine--tRNA ligase (860 aa).

Residues His-563, His-567, Cys-665, and His-669 each coordinate Zn(2+). Positions 824 to 843 are disordered; the sequence is VGGKGGGRPDMAQAGGTDSS.

Belongs to the class-II aminoacyl-tRNA synthetase family. Zn(2+) is required as a cofactor.

It localises to the cytoplasm. It catalyses the reaction tRNA(Ala) + L-alanine + ATP = L-alanyl-tRNA(Ala) + AMP + diphosphate. Functionally, catalyzes the attachment of alanine to tRNA(Ala) in a two-step reaction: alanine is first activated by ATP to form Ala-AMP and then transferred to the acceptor end of tRNA(Ala). Also edits incorrectly charged Ser-tRNA(Ala) and Gly-tRNA(Ala) via its editing domain. In Vibrio vulnificus (strain YJ016), this protein is Alanine--tRNA ligase.